A 561-amino-acid polypeptide reads, in one-letter code: MMQGEAHPSASLIDRTIKMRKETEARKVVLAWGLLNVSMAGMIYTEMTGKLISSYYNVTYWPLWYIELALASLFSLNALFDFWRYFKYTVAPTSLVVSPGQQTLLGLKTAVVQTTPPHDLAATQIPPAPPSPSIQGQSVLSYSPSRSPSTSPKFTTSCMTGYSPQLQGLSSGGSGSYSPGVTYSPVSGYNKLASFSPSPPSPYPTTVGPVESSGLRSRYRSSPTVYNSPTDKEDYMTDLRTLDTFLRSEEEKQHRVKLGSPDSTSPSSSPTFWNYSRSMGDYAQTLKKFQYQLACRSQAPCANKDEADLSSKQAAEEVWARVAMNRQLLDHMDSWTAKFRNWINETILVPLVQEIESVSTQMRRMGCPELQIGEASITSLKQAALVKAPLIPTLNTIVQYLDLTPNQEYLFERIKELSQGGCMSSFRWNRGGDFKGRKWDTDLPTDSAIIMHVFCTYLDSRLPPHPKYPDGKTFTSQHFVQTPNKPDVTNENVFCIYQSAINPPHYELIYQRHVYNLPKGRNNMFHTLLMFLYIIKTKESGMLGRVNLGLSGVNILWIFGE.

Phosphoserine is present on residues serine 9 and serine 11. A helical transmembrane segment spans residues 28–48; sequence VVLAWGLLNVSMAGMIYTEMT. Residue asparagine 57 is glycosylated (N-linked (GlcNAc...) asparagine). The chain crosses the membrane as a helical span at residues 60-80; sequence YWPLWYIELALASLFSLNALF. Serine 98 carries the phosphoserine modification. Disordered regions lie at residues 119–157 and 195–234; these read DLAA…FTTS and FSPS…DKED. A compositionally biased stretch (low complexity) spans 133–157; sequence SIQGQSVLSYSPSRSPSTSPKFTTS. Residues serine 201, serine 222, and serine 248 each carry the phosphoserine modification. Residues 220 to 229 show a composition bias toward polar residues; it reads RSSPTVYNSP. A disordered region spans residues 250–271; that stretch reads EEKQHRVKLGSPDSTSPSSSPT. Residues 260 to 271 show a composition bias toward low complexity; that stretch reads SPDSTSPSSSPT. Asparagine 274 carries an N-linked (GlcNAc...) asparagine glycan. Serine 278 bears the Phosphoserine mark.

Interacts with NUP205. Expressed in the testis.

Its subcellular location is the membrane. The protein resides in the nucleus envelope. It is found in the golgi apparatus. The protein localises to the cytoplasm. In terms of biological role, nuclear envelope protein which in association with NUP205, may be involved in nuclear transport of various nuclear proteins in addition to MYC. The sequence is that of Transmembrane protein 209 (TMEM209) from Homo sapiens (Human).